We begin with the raw amino-acid sequence, 181 residues long: ATP synthase subunit delta (181 aa).

The protein belongs to the ATPase delta chain family. F-type ATPases have 2 components, F(1) - the catalytic core - and F(0) - the membrane proton channel. F(1) has five subunits: alpha(3), beta(3), gamma(1), delta(1), epsilon(1). F(0) has three main subunits: a(1), b(2) and c(10-14). The alpha and beta chains form an alternating ring which encloses part of the gamma chain. F(1) is attached to F(0) by a central stalk formed by the gamma and epsilon chains, while a peripheral stalk is formed by the delta and b chains.

The protein localises to the cell inner membrane. Functionally, f(1)F(0) ATP synthase produces ATP from ADP in the presence of a proton or sodium gradient. F-type ATPases consist of two structural domains, F(1) containing the extramembraneous catalytic core and F(0) containing the membrane proton channel, linked together by a central stalk and a peripheral stalk. During catalysis, ATP synthesis in the catalytic domain of F(1) is coupled via a rotary mechanism of the central stalk subunits to proton translocation. This protein is part of the stalk that links CF(0) to CF(1). It either transmits conformational changes from CF(0) to CF(1) or is implicated in proton conduction. In Desulfotalea psychrophila (strain LSv54 / DSM 12343), this protein is ATP synthase subunit delta.